A 134-amino-acid polypeptide reads, in one-letter code: DNA-binding protein StpA (134 aa).

The interval 73 to 94 is disordered; the sequence is EELLGNSSAAAPRAGKKRQPRP. A DNA-binding region spans residues 112–117; the sequence is QGRTPK.

The protein belongs to the histone-like protein H-NS family. Forms homodimers, can interact with H-NS. May interact with Hha and/or Cnu.

The protein resides in the cytoplasm. The protein localises to the nucleoid. A DNA-binding protein that acts in a fashion similar to H-NS, repressing gene transcription. A subset of H-NS/StpA-regulated genes require auxillary proteins for repression; these auxillary proteins (Hha and other similar proteins) may also modulate oligomerization of the H-NS/StpA complex. The protein is DNA-binding protein StpA (stpA) of Escherichia coli O157:H7.